The sequence spans 219 residues: MSESLVIRQLGLQPYERVSFAMHRFTDARSTASADEIWLVQHPQVFTQGQAGKAEHLLQPGAIPVVQSDRGGQVTFHGPGQQVMYVLLDLRRRRLGVRSLVTLLEQTIVATLACFSISAHARTDAPGVYIGADKICSLGLRIRKGCSFHGLALNVAMDLSPFLRINPCGYAGLRMTQVSDLAPGTGIDDVAPVLLAECLRLMKASAGEIQGWDPAYYGT.

In terms of domain architecture, BPL/LPL catalytic spans 31-206; it reads TASADEIWLV…ECLRLMKASA (176 aa). Substrate is bound by residues 70 to 77, 137 to 139, and 150 to 152; these read RGGQVTFH, SLG, and GLA. The Acyl-thioester intermediate role is filled by Cys168.

The protein belongs to the LipB family.

Its subcellular location is the cytoplasm. It carries out the reaction octanoyl-[ACP] + L-lysyl-[protein] = N(6)-octanoyl-L-lysyl-[protein] + holo-[ACP] + H(+). It functions in the pathway protein modification; protein lipoylation via endogenous pathway; protein N(6)-(lipoyl)lysine from octanoyl-[acyl-carrier-protein]: step 1/2. Functionally, catalyzes the transfer of endogenously produced octanoic acid from octanoyl-acyl-carrier-protein onto the lipoyl domains of lipoate-dependent enzymes. Lipoyl-ACP can also act as a substrate although octanoyl-ACP is likely to be the physiological substrate. The sequence is that of Octanoyltransferase from Sodalis glossinidius (strain morsitans).